The primary structure comprises 205 residues: Isochorismatase domain-containing protein 2 (205 aa).

2 positions are modified to phosphoserine: Ser7 and Ser202.

The protein belongs to the isochorismatase family. Interacts with CDKN2A.

The protein resides in the cytoplasm. The protein localises to the nucleus. This chain is Isochorismatase domain-containing protein 2 (ISOC2), found in Homo sapiens (Human).